A 415-amino-acid chain; its full sequence is Glycerate 2-kinase (415 aa).

Lys-57 is a substrate binding site.

The protein belongs to the glycerate kinase type-1 family. Homodimer. Mg(2+) is required as a cofactor. The cofactor is Ni(2+). Requires Mn(2+) as cofactor. Co(2+) serves as cofactor.

The enzyme catalyses (R)-glycerate + ATP = (2R)-2-phosphoglycerate + ADP + H(+). Functionally, catalyzes the ATP-dependent phosphorylation of D-glycerate to 2-phosphoglycerate. It can also partially utilize GTP, CTP or UTP as phosphate donor. The sequence is that of Glycerate 2-kinase (gck) from Picrophilus torridus (strain ATCC 700027 / DSM 9790 / JCM 10055 / NBRC 100828 / KAW 2/3).